We begin with the raw amino-acid sequence, 283 residues long: Shikimate dehydrogenase (NADP(+)) (283 aa).

Residues 19-21 (SLS) and T66 contribute to the shikimate site. K70 acts as the Proton acceptor in catalysis. N91 and D106 together coordinate shikimate. NADP(+)-binding positions include 129–133 (GAGGA), 153–158 (NRTPEK), and L224. Y226 lines the shikimate pocket. G247 serves as a coordination point for NADP(+).

This sequence belongs to the shikimate dehydrogenase family. As to quaternary structure, homodimer.

The enzyme catalyses shikimate + NADP(+) = 3-dehydroshikimate + NADPH + H(+). Its pathway is metabolic intermediate biosynthesis; chorismate biosynthesis; chorismate from D-erythrose 4-phosphate and phosphoenolpyruvate: step 4/7. Involved in the biosynthesis of the chorismate, which leads to the biosynthesis of aromatic amino acids. Catalyzes the reversible NADPH linked reduction of 3-dehydroshikimate (DHSA) to yield shikimate (SA). The chain is Shikimate dehydrogenase (NADP(+)) from Methanothermobacter thermautotrophicus (strain ATCC 29096 / DSM 1053 / JCM 10044 / NBRC 100330 / Delta H) (Methanobacterium thermoautotrophicum).